The following is a 641-amino-acid chain: 1-deoxy-D-xylulose-5-phosphate synthase (641 aa).

Thiamine diphosphate contacts are provided by residues histidine 79 and 120–122 (AHS). Aspartate 151 is a Mg(2+) binding site. Residues 152–153 (GS), asparagine 180, tyrosine 290, and glutamate 372 each bind thiamine diphosphate. Asparagine 180 lines the Mg(2+) pocket.

Belongs to the transketolase family. DXPS subfamily. As to quaternary structure, homodimer. Mg(2+) is required as a cofactor. Thiamine diphosphate serves as cofactor.

The enzyme catalyses D-glyceraldehyde 3-phosphate + pyruvate + H(+) = 1-deoxy-D-xylulose 5-phosphate + CO2. Its pathway is metabolic intermediate biosynthesis; 1-deoxy-D-xylulose 5-phosphate biosynthesis; 1-deoxy-D-xylulose 5-phosphate from D-glyceraldehyde 3-phosphate and pyruvate: step 1/1. In terms of biological role, catalyzes the acyloin condensation reaction between C atoms 2 and 3 of pyruvate and glyceraldehyde 3-phosphate to yield 1-deoxy-D-xylulose-5-phosphate (DXP). The sequence is that of 1-deoxy-D-xylulose-5-phosphate synthase from Rhodopseudomonas palustris (strain BisB18).